The following is a 362-amino-acid chain: Serine/threonine-protein kinase SBK2 (362 aa).

Over residues Met1–Met11 the composition is skewed to basic and acidic residues. The tract at residues Met1–Gly26 is disordered. In terms of domain architecture, Protein kinase spans Tyr62–Lys330. ATP-binding positions include Leu68–Val76 and Lys91. The active-site Proton acceptor is the Asp183. Residues Trp329–Cys362 form a disordered region.

It belongs to the protein kinase superfamily. Ser/Thr protein kinase family. STKL subfamily.

It catalyses the reaction L-seryl-[protein] + ATP = O-phospho-L-seryl-[protein] + ADP + H(+). The catalysed reaction is L-threonyl-[protein] + ATP = O-phospho-L-threonyl-[protein] + ADP + H(+). This is Serine/threonine-protein kinase SBK2 (Sbk2) from Mus musculus (Mouse).